The primary structure comprises 203 residues: Urease accessory protein UreG (203 aa).

12 to 19 lines the GTP pocket; the sequence is GPVGSGKT.

The protein belongs to the SIMIBI class G3E GTPase family. UreG subfamily. As to quaternary structure, homodimer. UreD, UreF and UreG form a complex that acts as a GTP-hydrolysis-dependent molecular chaperone, activating the urease apoprotein by helping to assemble the nickel containing metallocenter of UreC. The UreE protein probably delivers the nickel.

It is found in the cytoplasm. Its function is as follows. Facilitates the functional incorporation of the urease nickel metallocenter. This process requires GTP hydrolysis, probably effectuated by UreG. The sequence is that of Urease accessory protein UreG from Alteromonas mediterranea (strain DSM 17117 / CIP 110805 / LMG 28347 / Deep ecotype).